A 167-amino-acid chain; its full sequence is Ureidoglycolate lyase (167 aa).

The protein belongs to the ureidoglycolate lyase family. As to quaternary structure, homodimer. The cofactor is Ni(2+).

It catalyses the reaction (S)-ureidoglycolate = urea + glyoxylate. It participates in nitrogen metabolism; (S)-allantoin degradation. Its function is as follows. Catalyzes the catabolism of the allantoin degradation intermediate (S)-ureidoglycolate, generating urea and glyoxylate. Involved in the utilization of allantoin as nitrogen source. This is Ureidoglycolate lyase from Pseudomonas putida (strain W619).